A 335-amino-acid polypeptide reads, in one-letter code: Capsular polysaccharide phosphotransferase WcwK (335 aa).

The protein belongs to the stealth family.

In Streptococcus pneumoniae, this protein is Capsular polysaccharide phosphotransferase WcwK (wcwK).